A 290-amino-acid polypeptide reads, in one-letter code: MLKTIQDKARHRTRPLWAWLKLLWQRIDEDNMTTLAGNLAYVSLLSLVPLVAVVFALFAAFPMFSDVSIQLRHFIFANFLPATGDVIQRYIEQFVANSNKMTAVGACGLIVTALLLMYSIDSALNTIWRSKRARPKIYSFAVYWMILTLGPLLAGASLAISAYLLSLRWASDLNTVIDNVLRIFPLLLSWISFWLLYSIVPTIRVPNRDAIVGAFVAALLFEAGKKGFALYITMFPSYQLIYGVLAVIPILFVWVYWTWCIVLLGAEITVTLGEYRKLKQAAEQEEDDEP.

A run of 6 helical transmembrane segments spans residues Leu-44 to Phe-64, Val-104 to Leu-124, Phe-140 to Ile-160, Ile-183 to Ile-203, Ala-210 to Leu-230, and Val-244 to Leu-264.

This sequence belongs to the UPF0761 family.

The protein resides in the cell inner membrane. The polypeptide is UPF0761 membrane protein YihY (Escherichia coli O1:K1 / APEC).